Reading from the N-terminus, the 104-residue chain is Glycine-rich protein (104 aa).

An N-terminal signal peptide occupies residues 1-18; that stretch reads MKSMIAAILFALVATSLA.

It belongs to the non-disulfide-bridged peptide (NDBP) superfamily. Expressed by the venom gland.

It is found in the secreted. The polypeptide is Glycine-rich protein (Lychas mucronatus (Chinese swimming scorpion)).